We begin with the raw amino-acid sequence, 146 residues long: Hemoglobin subunit beta (146 aa).

The 145-residue stretch at 2-146 (QWSAEEKQLI…VAHALARKYH (145 aa)) folds into the Globin domain. His-63 and His-92 together coordinate heme b.

The protein belongs to the globin family. As to quaternary structure, heterotetramer of two alpha chains and two beta chains. As to expression, red blood cells.

In terms of biological role, involved in oxygen transport from the lung to the various peripheral tissues. The polypeptide is Hemoglobin subunit beta (HBB) (Struthio camelus (Common ostrich)).